Here is a 71-residue protein sequence, read N- to C-terminus: Small ribosomal subunit protein bS18 (71 aa).

It belongs to the bacterial ribosomal protein bS18 family. In terms of assembly, part of the 30S ribosomal subunit. Forms a tight heterodimer with protein bS6.

Functionally, binds as a heterodimer with protein bS6 to the central domain of the 16S rRNA, where it helps stabilize the platform of the 30S subunit. The sequence is that of Small ribosomal subunit protein bS18 from Synechocystis sp. (strain ATCC 27184 / PCC 6803 / Kazusa).